A 171-amino-acid polypeptide reads, in one-letter code: ATP synthase subunit b (171 aa).

The helical transmembrane segment at 12–34 (FALNLNLFETNVINLAVVAFGLY) threads the bilayer.

This sequence belongs to the ATPase B chain family. F-type ATPases have 2 components, F(1) - the catalytic core - and F(0) - the membrane proton channel. F(1) has five subunits: alpha(3), beta(3), gamma(1), delta(1), epsilon(1). F(0) has four main subunits: a(1), b(1), b'(1) and c(10-14). The alpha and beta chains form an alternating ring which encloses part of the gamma chain. F(1) is attached to F(0) by a central stalk formed by the gamma and epsilon chains, while a peripheral stalk is formed by the delta, b and b' chains.

It localises to the cellular thylakoid membrane. In terms of biological role, f(1)F(0) ATP synthase produces ATP from ADP in the presence of a proton or sodium gradient. F-type ATPases consist of two structural domains, F(1) containing the extramembraneous catalytic core and F(0) containing the membrane proton channel, linked together by a central stalk and a peripheral stalk. During catalysis, ATP synthesis in the catalytic domain of F(1) is coupled via a rotary mechanism of the central stalk subunits to proton translocation. Component of the F(0) channel, it forms part of the peripheral stalk, linking F(1) to F(0). The chain is ATP synthase subunit b from Prochlorococcus marinus (strain SARG / CCMP1375 / SS120).